Consider the following 140-residue polypeptide: MAFEALLEEQREETRLIIEELLEDGSDPDALYTIEHHLSCNNFDSLEKAAVDAFKLGYEVTEPEELELEDGTTVMCVDILSEGALKAELIDAQVEQLVNLVAKYNVDYDGWGTYFEDPNAQDDDEDDGEAIDEDDNGIRH.

Residues 115 to 140 (FEDPNAQDDDEDDGEAIDEDDNGIRH) form a disordered region. A compositionally biased stretch (acidic residues) spans 119–140 (NAQDDDEDDGEAIDEDDNGIRH).

This sequence belongs to the RraB family. In terms of assembly, interacts with the C-terminal region of Rne.

Its subcellular location is the cytoplasm. Functionally, globally modulates RNA abundance by binding to RNase E (Rne) and regulating its endonucleolytic activity. Can modulate Rne action in a substrate-dependent manner by altering the composition of the degradosome. The sequence is that of Regulator of ribonuclease activity B from Pantoea ananatis (strain LMG 20103).